Reading from the N-terminus, the 287-residue chain is UPF0725 protein At1g19060 (287 aa).

Belongs to the UPF0725 (EMB2204) family.

This Arabidopsis thaliana (Mouse-ear cress) protein is UPF0725 protein At1g19060.